Here is a 1116-residue protein sequence, read N- to C-terminus: Probable chitinase LysM11 (1116 aa).

The LysM domain maps to 233-283 (GTYTIQTNDNCAEIAAHFGVTQDDIYDLNEDTWGWAGCGTNDLKADQVICL). The 374-residue stretch at 346–719 (FYHVAYFEVF…LGVDPDSDEA (374 aa)) folds into the GH18 domain. Glutamate 466 (proton donor) is an active-site residue. Residues tyrosine 467 and tryptophan 701 each contribute to the chitin site.

The protein belongs to the glycosyl hydrolase 18 family. Chitinase class V subfamily.

It catalyses the reaction Random endo-hydrolysis of N-acetyl-beta-D-glucosaminide (1-&gt;4)-beta-linkages in chitin and chitodextrins.. Probable chitinase involved in the degradation of chitin, a component of the cell walls of fungi and exoskeletal elements of some animals (including worms and arthropods). Might be involved in manipulation of host defenses for successful infection. The chain is Probable chitinase LysM11 from Penicillium expansum (Blue mold rot fungus).